Reading from the N-terminus, the 426-residue chain is MLDIKRVRDNFAEIKEMLLTRNEDLGNLDDFENLDAKRRELIAKTEELKAERNKVSEQISVMKRNKENADEVIARMRQVGDEIKELDIQLNDVEDRFKDMMMRLPNVPHESVPVGTTEDDNVEEYTWGEIPAFDFEIKAHWDLATDLKIVDFERGAKVTGSRFLFYRGLGARLERALMTFMMDLHAEEHGYEEMLPPVIVNRESLTGTGQLPKFEEDVFKLAETDYFMIPTAEVPVTNFYRDEILTAEALPQGFAAYSACFRSEAGSAGRDTRGLIRQHQFNKVELVRFVKPEESYEQLELLTGHAEKVLQLLGLPYRKLKMCTADLGFTAAKKYDLEVWIPAQNMYREISSCSNFEDFQARRANIRFRREPNAKPEYVHTLNGSGLAIGRTVAAILENYQQADGSVVIPEVLRPYMGGKEVIAPK.

Residue 231 to 233 (TAE) participates in L-serine binding. 262–264 (RSE) is a binding site for ATP. Glutamate 285 is an L-serine binding site. Position 349 to 352 (349 to 352 (EISS)) interacts with ATP. Serine 385 provides a ligand contact to L-serine.

Belongs to the class-II aminoacyl-tRNA synthetase family. Type-1 seryl-tRNA synthetase subfamily. In terms of assembly, homodimer. The tRNA molecule binds across the dimer.

Its subcellular location is the cytoplasm. It carries out the reaction tRNA(Ser) + L-serine + ATP = L-seryl-tRNA(Ser) + AMP + diphosphate + H(+). The catalysed reaction is tRNA(Sec) + L-serine + ATP = L-seryl-tRNA(Sec) + AMP + diphosphate + H(+). It functions in the pathway aminoacyl-tRNA biosynthesis; selenocysteinyl-tRNA(Sec) biosynthesis; L-seryl-tRNA(Sec) from L-serine and tRNA(Sec): step 1/1. Its function is as follows. Catalyzes the attachment of serine to tRNA(Ser). Is also able to aminoacylate tRNA(Sec) with serine, to form the misacylated tRNA L-seryl-tRNA(Sec), which will be further converted into selenocysteinyl-tRNA(Sec). The protein is Serine--tRNA ligase of Lysinibacillus sphaericus (strain C3-41).